Reading from the N-terminus, the 189-residue chain is Chitin synthase 3 (189 aa).

The protein belongs to the chitin synthase family. Class II subfamily.

The protein resides in the cell membrane. The enzyme catalyses [(1-&gt;4)-N-acetyl-beta-D-glucosaminyl](n) + UDP-N-acetyl-alpha-D-glucosamine = [(1-&gt;4)-N-acetyl-beta-D-glucosaminyl](n+1) + UDP + H(+). Polymerizes chitin, a structural polymer of the cell wall and septum, by transferring the sugar moiety of UDP-GlcNAc to the non-reducing end of the growing chitin polymer. In Ajellomyces capsulatus (Darling's disease fungus), this protein is Chitin synthase 3 (CHS3).